Reading from the N-terminus, the 453-residue chain is MSGPAMVHQEPYSVQATAAIASAITFLILFTIFGNALVILAVLTSRSLRAPQNLFLVSLAAADILVATLIIPFSLANELLGYWYFWRAWCEVYLALDVLFCTSSIVHLCAISLDRYWAVSRALEYNSKRTPRRIKCIILTVWLIAAVISLPPLIYKGDQRPEPHGLPQCELNQEAWYILASSIGSFFAPCLIMILVYLRIYVIAKRSHCRGLGAKRGSGEGESKKPHPAAGGVPASAKVPTLVSPLSSVGEANGHPKPPREKEEGETPEDPEARALPPNWSALPRSVQDQKKGTSGATAEKGAEEDEEEVEECEPQTLPASPASVFNPPLQQPQTSRVLATLRGQVLLSKNVGVASGQWWRRRTQLSREKRFTFVLAVVIGVFVVCWFPFFFSYSLGAICPQHCKVPHGLFQFFFWIGYCNSSLNPVIYTIFNQDFRRAFRRILCRQWTQTGW.

The Extracellular portion of the chain corresponds to 1-17 (MSGPAMVHQEPYSVQAT). The chain crosses the membrane as a helical span at residues 18–42 (AAIASAITFLILFTIFGNALVILAV). Topologically, residues 43 to 54 (LTSRSLRAPQNL) are cytoplasmic. The chain crosses the membrane as a helical span at residues 55 to 80 (FLVSLAAADILVATLIIPFSLANELL). The Extracellular segment spans residues 81 to 90 (GYWYFWRAWC). A disulfide bridge links cysteine 90 with cysteine 169. Residues 91 to 113 (EVYLALDVLFCTSSIVHLCAISL) traverse the membrane as a helical segment. Residues 114–135 (DRYWAVSRALEYNSKRTPRRIK) lie on the Cytoplasmic side of the membrane. Residues 136 to 158 (CIILTVWLIAAVISLPPLIYKGD) traverse the membrane as a helical segment. The Extracellular segment spans residues 159–174 (QRPEPHGLPQCELNQE). Residues 175–198 (AWYILASSIGSFFAPCLIMILVYL) form a helical membrane-spanning segment. Residues 199–375 (RIYVIAKRSH…LSREKRFTFV (177 aa)) are Cytoplasmic-facing. The segment at 214 to 329 (AKRGSGEGES…ASPASVFNPP (116 aa)) is disordered. Residues 303-314 (AEEDEEEVEECE) are compositionally biased toward acidic residues. A helical transmembrane segment spans residues 376 to 399 (LAVVIGVFVVCWFPFFFSYSLGAI). Over 400-408 (CPQHCKVPH) the chain is Extracellular. A helical membrane pass occupies residues 409–432 (GLFQFFFWIGYCNSSLNPVIYTIF). The Cytoplasmic segment spans residues 433-453 (NQDFRRAFRRILCRQWTQTGW). Residue cysteine 445 is the site of S-palmitoyl cysteine attachment.

It belongs to the G-protein coupled receptor 1 family. Adrenergic receptor subfamily. ADRA2B sub-subfamily. In terms of assembly, interacts with RAB26. Interacts with PPP1R9B. Interacts with GGA1, GGA2 and GGA3.

It localises to the cell membrane. Its function is as follows. Alpha-2 adrenergic receptors mediate the catecholamine-induced inhibition of adenylate cyclase through the action of G proteins. This chain is Alpha-2B adrenergic receptor (Adra2b), found in Mus musculus (Mouse).